The sequence spans 412 residues: DnaJ homolog subfamily A member 2 (412 aa).

The J domain maps to 8–70 (KLYDILGVPP…EKRELYDRYG (63 aa)). Lysine 39 is subject to N6-acetyllysine. A phosphoserine mark is found at serine 78 and serine 123. A CR-type zinc finger spans residues 130-214 (GKTTKLQLSK…CEGKKVIKEV (85 aa)). A Glycyl lysine isopeptide (Lys-Gly) (interchain with G-Cter in SUMO2) cross-link involves residue lysine 134. Zn(2+) is bound by residues cysteine 143 and cysteine 146. The CXXCXGXG motif repeat unit spans residues 143 to 150 (CSACSGQG). Lysine 152 bears the N6-acetyllysine mark. The Zn(2+) site is built by cysteine 159, cysteine 162, cysteine 186, cysteine 189, cysteine 202, and cysteine 205. CXXCXGXG motif repeat units lie at residues 159–166 (CSACRGRG), 186–193 (CSDCNGEG), and 202–209 (CKKCEGKK). The disordered stretch occupies residues 365–412 (IGETEEVELQEFDSTRGSGGGQRREAYNDSSDEESSSHHGPGVQCAHQ). The residue at position 391 (tyrosine 391) is a Phosphotyrosine. 2 positions are modified to phosphoserine: serine 394 and serine 395. Position 409 is a cysteine methyl ester (cysteine 409). Cysteine 409 carries the S-farnesyl cysteine lipid modification. The propeptide at 410–412 (AHQ) is removed in mature form.

It localises to the membrane. Functionally, co-chaperone of Hsc70. Stimulates ATP hydrolysis and the folding of unfolded proteins mediated by HSPA1A/B (in vitro). This chain is DnaJ homolog subfamily A member 2 (Dnaja2), found in Mus musculus (Mouse).